Consider the following 116-residue polypeptide: MQIHVVKSKIHRVKVTGADLDYIGSITIDEDLMEAASIIEGEKVQIVNNNNGERLETYVIPGLRNTGEITLNGAAARKVAKGDILIIIAYGIMELEEARNFKPSLVFPDEETNLLK.

Serine 25 (schiff-base intermediate with substrate; via pyruvic acid) is an active-site residue. Serine 25 is modified (pyruvic acid (Ser)). Threonine 57 serves as a coordination point for substrate. Residue tyrosine 58 is the Proton donor of the active site. A substrate-binding site is contributed by 73–75 (GAA).

The protein belongs to the PanD family. As to quaternary structure, heterooctamer of four alpha and four beta subunits. Requires pyruvate as cofactor. In terms of processing, is synthesized initially as an inactive proenzyme, which is activated by self-cleavage at a specific serine bond to produce a beta-subunit with a hydroxyl group at its C-terminus and an alpha-subunit with a pyruvoyl group at its N-terminus.

It localises to the cytoplasm. The enzyme catalyses L-aspartate + H(+) = beta-alanine + CO2. Its pathway is cofactor biosynthesis; (R)-pantothenate biosynthesis; beta-alanine from L-aspartate: step 1/1. In terms of biological role, catalyzes the pyruvoyl-dependent decarboxylation of aspartate to produce beta-alanine. This Christiangramia forsetii (strain DSM 17595 / CGMCC 1.15422 / KT0803) (Gramella forsetii) protein is Aspartate 1-decarboxylase.